Reading from the N-terminus, the 532-residue chain is Fatty aldehyde dehydrogenase HFD1 (532 aa).

Serine 111 carries the post-translational modification Phosphoserine. The helical transmembrane segment at 134-152 (IIAPFNFPLLLAFAPLAAA) threads the bilayer. 214 to 219 (GSPRVG) is a binding site for NAD(+). Catalysis depends on residues glutamate 236 and cysteine 273.

The protein belongs to the aldehyde dehydrogenase family.

The protein resides in the lipid droplet. It localises to the mitochondrion outer membrane. The protein localises to the endosome membrane. It is found in the cytoplasmic granule membrane. It carries out the reaction an aldehyde + NAD(+) + H2O = a carboxylate + NADH + 2 H(+). The enzyme catalyses hexadecanoate + NADH + 2 H(+) = hexadecanal + NAD(+) + H2O. It catalyses the reaction 4-hydroxybenzaldehyde + NAD(+) + H2O = 4-hydroxybenzoate + NADH + 2 H(+). In terms of biological role, catalyzes the oxidation of long-chain aliphatic aldehydes to fatty acids. Responsible for conversion of the sphingosine 1-phosphate (S1P) degradation product hexadecenal to hexadecenoic acid. Involved in coenzyme Q (CoQ) biosynthesis, catalyzing the last step in the tyrosine to 4-hydroxybenzoate (4-HB) pathway. Oxidizes 4-hydroxybenzaldehyde (4-Hbz) to 4-HB, the aromatic precursor for coenzyme Q. The protein is Fatty aldehyde dehydrogenase HFD1 (HFD1) of Saccharomyces cerevisiae (strain ATCC 204508 / S288c) (Baker's yeast).